A 344-amino-acid chain; its full sequence is tRNA N6-adenosine threonylcarbamoyltransferase (344 aa).

His-119 and His-123 together coordinate Fe cation. Substrate contacts are provided by residues 141-145 (VVSGG), Asp-174, Gly-187, Asp-191, and Asn-280. Asp-310 contacts Fe cation.

The protein belongs to the KAE1 / TsaD family. It depends on Fe(2+) as a cofactor.

Its subcellular location is the cytoplasm. It carries out the reaction L-threonylcarbamoyladenylate + adenosine(37) in tRNA = N(6)-L-threonylcarbamoyladenosine(37) in tRNA + AMP + H(+). In terms of biological role, required for the formation of a threonylcarbamoyl group on adenosine at position 37 (t(6)A37) in tRNAs that read codons beginning with adenine. Is involved in the transfer of the threonylcarbamoyl moiety of threonylcarbamoyl-AMP (TC-AMP) to the N6 group of A37, together with TsaE and TsaB. TsaD likely plays a direct catalytic role in this reaction. The sequence is that of tRNA N6-adenosine threonylcarbamoyltransferase from Listeria innocua serovar 6a (strain ATCC BAA-680 / CLIP 11262).